Consider the following 103-residue polypeptide: Large ribosomal subunit protein bL21 (103 aa).

It belongs to the bacterial ribosomal protein bL21 family. Part of the 50S ribosomal subunit. Contacts protein L20.

Functionally, this protein binds to 23S rRNA in the presence of protein L20. The polypeptide is Large ribosomal subunit protein bL21 (Erwinia tasmaniensis (strain DSM 17950 / CFBP 7177 / CIP 109463 / NCPPB 4357 / Et1/99)).